Reading from the N-terminus, the 331-residue chain is Beta-hexosaminidase (331 aa).

Residues aspartate 60, arginine 68, arginine 133, and 163–164 (KH) contribute to the substrate site. Histidine 176 acts as the Proton donor/acceptor in catalysis. Aspartate 247 acts as the Nucleophile in catalysis.

Belongs to the glycosyl hydrolase 3 family. NagZ subfamily.

The protein localises to the cytoplasm. The enzyme catalyses Hydrolysis of terminal non-reducing N-acetyl-D-hexosamine residues in N-acetyl-beta-D-hexosaminides.. Its pathway is cell wall biogenesis; peptidoglycan recycling. In terms of biological role, plays a role in peptidoglycan recycling by cleaving the terminal beta-1,4-linked N-acetylglucosamine (GlcNAc) from peptide-linked peptidoglycan fragments, giving rise to free GlcNAc, anhydro-N-acetylmuramic acid and anhydro-N-acetylmuramic acid-linked peptides. This Xanthomonas campestris pv. campestris (strain B100) protein is Beta-hexosaminidase.